A 156-amino-acid polypeptide reads, in one-letter code: Phytohormone-binding protein (156 aa).

The gibberellin A3 site is built by Q22, Q68, and T141.

It belongs to the BetVI family.

Its function is as follows. Binds gibberellin A3 (GA3) in vitro. This chain is Phytohormone-binding protein, found in Medicago truncatula (Barrel medic).